Here is a 343-residue protein sequence, read N- to C-terminus: Methionine import ATP-binding protein MetN 1 (343 aa).

The ABC transporter domain maps to 2 to 241 (IKLSNITKVF…PKTPLAQKFI (240 aa)). Position 38 to 45 (38 to 45 (GASGAGKS)) interacts with ATP.

It belongs to the ABC transporter superfamily. Methionine importer (TC 3.A.1.24) family. The complex is composed of two ATP-binding proteins (MetN), two transmembrane proteins (MetI) and a solute-binding protein (MetQ).

The protein resides in the cell inner membrane. The enzyme catalyses L-methionine(out) + ATP + H2O = L-methionine(in) + ADP + phosphate + H(+). The catalysed reaction is D-methionine(out) + ATP + H2O = D-methionine(in) + ADP + phosphate + H(+). Part of the ABC transporter complex MetNIQ involved in methionine import. Responsible for energy coupling to the transport system. The protein is Methionine import ATP-binding protein MetN 1 of Salmonella typhi.